Reading from the N-terminus, the 191-residue chain is Protein Ves (191 aa).

This sequence belongs to the Ves family.

The protein is Protein Ves of Escherichia coli (strain SMS-3-5 / SECEC).